A 396-amino-acid polypeptide reads, in one-letter code: Large ribosomal subunit protein uL24m (396 aa).

The interval 374-396 (QLSLGGGQEDAATTTSPEQPKVV) is disordered. The span at 384 to 396 (AATTTSPEQPKVV) shows a compositional bias: polar residues.

It belongs to the universal ribosomal protein uL24 family. In terms of assembly, component of the mitochondrial large ribosomal subunit (mt-LSU). Mature N.crassa 74S mitochondrial ribosomes consist of a small (37S) and a large (54S) subunit. The 37S small subunit contains a 16S ribosomal RNA (16S mt-rRNA) and 32 different proteins. The 54S large subunit contains a 23S rRNA (23S mt-rRNA) and 42 different proteins. uL24m forms the wall of the exit tunnel.

It localises to the mitochondrion. Its function is as follows. Component of the mitochondrial ribosome (mitoribosome), a dedicated translation machinery responsible for the synthesis of mitochondrial genome-encoded proteins, including at least some of the essential transmembrane subunits of the mitochondrial respiratory chain. The mitoribosomes are attached to the mitochondrial inner membrane and translation products are cotranslationally integrated into the membrane. This chain is Large ribosomal subunit protein uL24m (mrpl40), found in Neurospora crassa (strain ATCC 24698 / 74-OR23-1A / CBS 708.71 / DSM 1257 / FGSC 987).